Consider the following 422-residue polypeptide: L-threonine dehydratase biosynthetic IlvA (422 aa).

Lys56 carries the N6-(pyridoxal phosphate)lysine modification. Pyridoxal 5'-phosphate-binding positions include Asn83, Gly189 to Leu193, and Ser315. The region spanning His339 to Glu413 is the ACT-like domain.

The protein belongs to the serine/threonine dehydratase family. In terms of assembly, homotetramer. It depends on pyridoxal 5'-phosphate as a cofactor.

It carries out the reaction L-threonine = 2-oxobutanoate + NH4(+). Its pathway is amino-acid biosynthesis; L-isoleucine biosynthesis; 2-oxobutanoate from L-threonine: step 1/1. In terms of biological role, catalyzes the anaerobic formation of alpha-ketobutyrate and ammonia from threonine in a two-step reaction. The first step involved a dehydration of threonine and a production of enamine intermediates (aminocrotonate), which tautomerizes to its imine form (iminobutyrate). Both intermediates are unstable and short-lived. The second step is the nonenzymatic hydrolysis of the enamine/imine intermediates to form 2-ketobutyrate and free ammonia. In the low water environment of the cell, the second step is accelerated by RidA. The chain is L-threonine dehydratase biosynthetic IlvA (ilvA) from Staphylococcus aureus (strain NCTC 8325 / PS 47).